Consider the following 391-residue polypeptide: 8-amino-7-oxononanoate synthase (391 aa).

Arg-19 serves as a coordination point for substrate. Position 106-107 (106-107 (GY)) interacts with pyridoxal 5'-phosphate. Substrate is bound at residue His-131. Ser-178, His-206, and Thr-234 together coordinate pyridoxal 5'-phosphate. An N6-(pyridoxal phosphate)lysine modification is found at Lys-237. Substrate is bound at residue Thr-353.

This sequence belongs to the class-II pyridoxal-phosphate-dependent aminotransferase family. BioF subfamily. As to quaternary structure, homodimer. Pyridoxal 5'-phosphate serves as cofactor.

The catalysed reaction is 6-carboxyhexanoyl-[ACP] + L-alanine + H(+) = (8S)-8-amino-7-oxononanoate + holo-[ACP] + CO2. It participates in cofactor biosynthesis; biotin biosynthesis. Functionally, catalyzes the decarboxylative condensation of pimeloyl-[acyl-carrier protein] and L-alanine to produce 8-amino-7-oxononanoate (AON), [acyl-carrier protein], and carbon dioxide. The sequence is that of 8-amino-7-oxononanoate synthase from Geobacter metallireducens (strain ATCC 53774 / DSM 7210 / GS-15).